Consider the following 72-residue polypeptide: Exodeoxyribonuclease 7 small subunit (72 aa).

The protein belongs to the XseB family. In terms of assembly, heterooligomer composed of large and small subunits.

The protein resides in the cytoplasm. It catalyses the reaction Exonucleolytic cleavage in either 5'- to 3'- or 3'- to 5'-direction to yield nucleoside 5'-phosphates.. Bidirectionally degrades single-stranded DNA into large acid-insoluble oligonucleotides, which are then degraded further into small acid-soluble oligonucleotides. The sequence is that of Exodeoxyribonuclease 7 small subunit from Chlamydia muridarum (strain MoPn / Nigg).